Consider the following 379-residue polypeptide: Cytochrome b (379 aa).

The next 4 membrane-spanning stretches (helical) occupy residues 33–53 (FGSLLGMCLGLQILTGLFLAM), 77–98 (WLIRYMHANGASMFFIFLYFHI), 113–133 (WNMGVLLLLTTMATAFMGYVL), and 178–198 (FFAFHFILPFIITAMVMIHLL). His-83 and His-97 together coordinate heme b. Residues His-182 and His-196 each coordinate heme b. Position 201 (His-201) interacts with a ubiquinone. 4 consecutive transmembrane segments (helical) span residues 226–246 (IKDILGALFMIITLMSLVMFS), 288–308 (LGGVLALASSILILMLFPILH), 320–340 (LSQCLMWMLVTNLLILTWIGG), and 347–367 (FITIGQMASMTYFFTTLILMP).

Belongs to the cytochrome b family. As to quaternary structure, the cytochrome bc1 complex contains 11 subunits: 3 respiratory subunits (MT-CYB, CYC1 and UQCRFS1), 2 core proteins (UQCRC1 and UQCRC2) and 6 low-molecular weight proteins (UQCRH/QCR6, UQCRB/QCR7, UQCRQ/QCR8, UQCR10/QCR9, UQCR11/QCR10 and a cleavage product of UQCRFS1). This cytochrome bc1 complex then forms a dimer. The cofactor is heme b.

Its subcellular location is the mitochondrion inner membrane. Component of the ubiquinol-cytochrome c reductase complex (complex III or cytochrome b-c1 complex) that is part of the mitochondrial respiratory chain. The b-c1 complex mediates electron transfer from ubiquinol to cytochrome c. Contributes to the generation of a proton gradient across the mitochondrial membrane that is then used for ATP synthesis. The sequence is that of Cytochrome b (MT-CYB) from Ctenomys leucodon (White-toothed tuco-tuco).